A 487-amino-acid chain; its full sequence is GTPase Der (487 aa).

2 consecutive EngA-type G domains span residues 3–166 and 201–374; these read PVIA…IAEL and VKLA…ESAT. GTP is bound by residues 9–16, 56–60, 118–121, 207–214, 254–258, and 319–322; these read GRPNVGKS, DTGGI, NKTD, DTAGV, and NKWD. The 85-residue stretch at 375–459 folds into the KH-like domain; sequence KRISTAMLRR…PIKIEFREGD (85 aa).

This sequence belongs to the TRAFAC class TrmE-Era-EngA-EngB-Septin-like GTPase superfamily. EngA (Der) GTPase family. Associates with the 50S ribosomal subunit.

Its function is as follows. GTPase that plays an essential role in the late steps of ribosome biogenesis. The sequence is that of GTPase Der from Pseudoalteromonas translucida (strain TAC 125).